An 87-amino-acid chain; its full sequence is Cell division topological specificity factor (87 aa).

Belongs to the MinE family.

In terms of biological role, prevents the cell division inhibition by proteins MinC and MinD at internal division sites while permitting inhibition at polar sites. This ensures cell division at the proper site by restricting the formation of a division septum at the midpoint of the long axis of the cell. The protein is Cell division topological specificity factor of Leptothrix cholodnii (strain ATCC 51168 / LMG 8142 / SP-6) (Leptothrix discophora (strain SP-6)).